Consider the following 542-residue polypeptide: Coiled-coil domain-containing protein 60 (542 aa).

A coiled-coil region spans residues 70-97; sequence TMLQEETAFKKHQQHLKKLQEEELNKFQ. 2 disordered regions span residues 228–284 and 334–358; these read ATRK…EEEV and QTTH…TQKK. Composition is skewed to low complexity over residues 245–261 and 342–351; these read SGGS…NPSS and RSSTTSGESH.

This Rattus norvegicus (Rat) protein is Coiled-coil domain-containing protein 60 (Ccdc60).